The following is an 862-amino-acid chain: Protein translocase subunit SecA (862 aa).

ATP is bound by residues Gln-88, 106–110 (GEGKT), and Asp-506. Zn(2+) is bound by residues Cys-839, Cys-841, Cys-850, and His-851.

This sequence belongs to the SecA family. As to quaternary structure, monomer and homodimer. Part of the essential Sec protein translocation apparatus which comprises SecA, SecYEG and auxiliary proteins SecDF-YajC and YidC. Zn(2+) is required as a cofactor.

The protein resides in the cell inner membrane. The protein localises to the cytoplasm. It carries out the reaction ATP + H2O + cellular proteinSide 1 = ADP + phosphate + cellular proteinSide 2.. Its function is as follows. Part of the Sec protein translocase complex. Interacts with the SecYEG preprotein conducting channel. Has a central role in coupling the hydrolysis of ATP to the transfer of proteins into and across the cell membrane, serving as an ATP-driven molecular motor driving the stepwise translocation of polypeptide chains across the membrane. This is Protein translocase subunit SecA from Campylobacter jejuni subsp. jejuni serotype O:2 (strain ATCC 700819 / NCTC 11168).